We begin with the raw amino-acid sequence, 115 residues long: UPF0342 protein Bsph_0375 (115 aa).

The protein belongs to the UPF0342 family.

This chain is UPF0342 protein Bsph_0375, found in Lysinibacillus sphaericus (strain C3-41).